Here is a 244-residue protein sequence, read N- to C-terminus: NAD(P)H-quinone oxidoreductase subunit K (244 aa).

Positions 60, 61, 125, and 156 each coordinate [4Fe-4S] cluster. The segment covering Ser221–Thr236 has biased composition (basic and acidic residues). The segment at Ser221–Glu244 is disordered.

This sequence belongs to the complex I 20 kDa subunit family. In terms of assembly, NDH-1 can be composed of about 15 different subunits; different subcomplexes with different compositions have been identified which probably have different functions. [4Fe-4S] cluster serves as cofactor.

The protein resides in the cellular thylakoid membrane. It catalyses the reaction a plastoquinone + NADH + (n+1) H(+)(in) = a plastoquinol + NAD(+) + n H(+)(out). It carries out the reaction a plastoquinone + NADPH + (n+1) H(+)(in) = a plastoquinol + NADP(+) + n H(+)(out). Functionally, NDH-1 shuttles electrons from an unknown electron donor, via FMN and iron-sulfur (Fe-S) centers, to quinones in the respiratory and/or the photosynthetic chain. The immediate electron acceptor for the enzyme in this species is believed to be plastoquinone. Couples the redox reaction to proton translocation, and thus conserves the redox energy in a proton gradient. Cyanobacterial NDH-1 also plays a role in inorganic carbon-concentration. The chain is NAD(P)H-quinone oxidoreductase subunit K from Prochlorococcus marinus (strain MIT 9312).